A 373-amino-acid chain; its full sequence is Dual-specificity RNA methyltransferase RlmN (373 aa).

The Proton acceptor role is filled by E94. Residues 100–339 (EDDRATLCVS…VIVRKTRGDD (240 aa)) form the Radical SAM core domain. A disulfide bridge links C107 with C344. [4Fe-4S] cluster-binding residues include C114, C118, and C121. S-adenosyl-L-methionine is bound by residues 168–169 (GE), S200, 222–224 (SIH), and N301. C344 functions as the S-methylcysteine intermediate in the catalytic mechanism.

It belongs to the radical SAM superfamily. RlmN family. [4Fe-4S] cluster serves as cofactor.

Its subcellular location is the cytoplasm. It catalyses the reaction adenosine(2503) in 23S rRNA + 2 reduced [2Fe-2S]-[ferredoxin] + 2 S-adenosyl-L-methionine = 2-methyladenosine(2503) in 23S rRNA + 5'-deoxyadenosine + L-methionine + 2 oxidized [2Fe-2S]-[ferredoxin] + S-adenosyl-L-homocysteine. It carries out the reaction adenosine(37) in tRNA + 2 reduced [2Fe-2S]-[ferredoxin] + 2 S-adenosyl-L-methionine = 2-methyladenosine(37) in tRNA + 5'-deoxyadenosine + L-methionine + 2 oxidized [2Fe-2S]-[ferredoxin] + S-adenosyl-L-homocysteine. In terms of biological role, specifically methylates position 2 of adenine 2503 in 23S rRNA and position 2 of adenine 37 in tRNAs. m2A2503 modification seems to play a crucial role in the proofreading step occurring at the peptidyl transferase center and thus would serve to optimize ribosomal fidelity. The protein is Dual-specificity RNA methyltransferase RlmN of Shewanella baltica (strain OS223).